Here is a 626-residue protein sequence, read N- to C-terminus: Bifurcating [FeFe] hydrogenase beta subunit (626 aa).

NAD(+) is bound at residue G198–G201. FMN is bound by residues K207 and N224–G228. D229 provides a ligand contact to NAD(+). FMN-binding positions include F312–E317 and I350–N352. Positions 485, 488, 491, 531, 578, 581, 584, 588, 608, 611, 614, and 618 each coordinate [4Fe-4S] cluster. 2 consecutive 4Fe-4S ferredoxin-type domains span residues K569 to G598 and K599 to V626.

This sequence belongs to the complex I 51 kDa subunit family. As to quaternary structure, heterotrimer composed of HydA (alpha subunit), HydB (beta subunit) and HydC (gamma subunit). Near neutral and acidic pH conditions favor oligomerization of the heterotrimeric holoenzyme. It depends on [2Fe-2S] cluster as a cofactor. The cofactor is [4Fe-4S] cluster. FMN is required as a cofactor.

The protein localises to the cytoplasm. It catalyses the reaction 2 H2 + 2 oxidized [2Fe-2S]-[ferredoxin] + NAD(+) = 2 reduced [2Fe-2S]-[ferredoxin] + NADH + 3 H(+). Catalyzes the oxidation of the physiological electron carriers NADH and reduced ferredoxin, coupled to the production of H(2). Acts as a bifurcating [FeFe] hydrogenase, which uses the exergonic oxidation of reduced ferredoxin to drive the unfavorable oxidation of NADH to produce H(2). The beta subunit contains flavin- and NAD-binding sites and is potentially the site for NADH oxidation, with the subsequent shuttling of electrons to the alpha subunit. The polypeptide is Bifurcating [FeFe] hydrogenase beta subunit (Thermotoga maritima (strain ATCC 43589 / DSM 3109 / JCM 10099 / NBRC 100826 / MSB8)).